The following is a 275-amino-acid chain: Rhamnulose-1-phosphate aldolase (275 aa).

Glu-117 is an active-site residue. The Zn(2+) site is built by His-141, His-143, and His-212.

This sequence belongs to the aldolase class II family. RhaD subfamily. As to quaternary structure, homotetramer. Requires Zn(2+) as cofactor.

The protein localises to the cytoplasm. The catalysed reaction is L-rhamnulose 1-phosphate = (S)-lactaldehyde + dihydroxyacetone phosphate. Its pathway is carbohydrate degradation; L-rhamnose degradation; glycerone phosphate from L-rhamnose: step 3/3. Catalyzes the reversible cleavage of L-rhamnulose-1-phosphate to dihydroxyacetone phosphate (DHAP) and L-lactaldehyde. This chain is Rhamnulose-1-phosphate aldolase, found in Salmonella paratyphi C (strain RKS4594).